Consider the following 555-residue polypeptide: Formate--tetrahydrofolate ligase (555 aa).

64–71 (TKAGIGKT) provides a ligand contact to ATP.

The protein belongs to the formate--tetrahydrofolate ligase family.

It catalyses the reaction (6S)-5,6,7,8-tetrahydrofolate + formate + ATP = (6R)-10-formyltetrahydrofolate + ADP + phosphate. It participates in one-carbon metabolism; tetrahydrofolate interconversion. This Parabacteroides distasonis (strain ATCC 8503 / DSM 20701 / CIP 104284 / JCM 5825 / NCTC 11152) protein is Formate--tetrahydrofolate ligase.